A 610-amino-acid polypeptide reads, in one-letter code: Glutamine--fructose-6-phosphate aminotransferase [isomerizing] (610 aa).

Cys-2 acts as the Nucleophile; for GATase activity in catalysis. Positions Cys-2 to Ala-221 constitute a Glutamine amidotransferase type-2 domain. 2 SIS domains span residues Ala-286–Arg-426 and Trp-459–Pro-600. The active-site For Fru-6P isomerization activity is Lys-605.

Homodimer.

It is found in the cytoplasm. It carries out the reaction D-fructose 6-phosphate + L-glutamine = D-glucosamine 6-phosphate + L-glutamate. Catalyzes the first step in hexosamine metabolism, converting fructose-6P into glucosamine-6P using glutamine as a nitrogen source. The protein is Glutamine--fructose-6-phosphate aminotransferase [isomerizing] of Bordetella pertussis (strain Tohama I / ATCC BAA-589 / NCTC 13251).